The chain runs to 376 residues: Erythronate-4-phosphate dehydrogenase (376 aa).

S45 and T66 together coordinate substrate. D146 and T175 together coordinate NAD(+). The active site involves R209. NAD(+) is bound at residue D233. The active site involves E238. The active-site Proton donor is the H255. G258 is an NAD(+) binding site. Y259 is a binding site for substrate.

It belongs to the D-isomer specific 2-hydroxyacid dehydrogenase family. PdxB subfamily. Homodimer.

It localises to the cytoplasm. The catalysed reaction is 4-phospho-D-erythronate + NAD(+) = (R)-3-hydroxy-2-oxo-4-phosphooxybutanoate + NADH + H(+). It participates in cofactor biosynthesis; pyridoxine 5'-phosphate biosynthesis; pyridoxine 5'-phosphate from D-erythrose 4-phosphate: step 2/5. Functionally, catalyzes the oxidation of erythronate-4-phosphate to 3-hydroxy-2-oxo-4-phosphonooxybutanoate. The chain is Erythronate-4-phosphate dehydrogenase from Baumannia cicadellinicola subsp. Homalodisca coagulata.